Reading from the N-terminus, the 403-residue chain is Nuclear receptor subfamily 2 group F member 5 (403 aa).

The disordered stretch occupies residues 16–44 (PGSQLQMCSQEPGGTPGTPSGSTPGNDAL). A DNA-binding region (nuclear receptor) is located at residues 51–126 (NVDCMVCGDK…VGMRREAVQR (76 aa)). 2 consecutive NR C4-type zinc fingers follow at residues 54-74 (CMVC…CEGC) and 90-114 (CRGN…LKKC). The NR LBD domain occupies 152-378 (YLSGFISLLL…TLLRDMLLSG (227 aa)).

The protein belongs to the nuclear hormone receptor family. NR2 subfamily.

The protein resides in the nucleus. Putative receptor that is required in photoreceptor cells precursors during eye development. This chain is Nuclear receptor subfamily 2 group F member 5 (nr2f5), found in Danio rerio (Zebrafish).